A 542-amino-acid polypeptide reads, in one-letter code: GPI alpha-1,2-mannosyltransferase 3 (542 aa).

Positions 1–36 are disordered; sequence MESQAADYNPASRNLHGSSGEMKLRRRKSRQYVSAQ. 8 helical membrane-spanning segments follow: residues 52 to 72, 125 to 145, 213 to 233, 244 to 264, 304 to 324, 327 to 347, 351 to 371, and 376 to 396; these read LVLFTIALRILNCFLVQTSFV, VQFLIWIPRLGQALLSAVADI, LVALACVVRPTALIPWVPLLF, HLTLHHFLPVGFITFSLSLII, GFPVVLGTHLPFFIHGCFLAP, LHILLLTVLWTLLVYSMLGHK, FIYPVLPFCMVFCGYSLAHLK, and AALSFLLLSNVPLAFYTGLVH. Asn-480 carries N-linked (GlcNAc...) asparagine glycosylation.

This sequence belongs to the glycosyltransferase 22 family. PIGB subfamily.

The protein localises to the endoplasmic reticulum membrane. It participates in glycolipid biosynthesis; glycosylphosphatidylinositol-anchor biosynthesis. Its function is as follows. Alpha-1,2-mannosyltransferase that catalyzes the transfer of the third mannose, via an alpha-1,2 bond, from a dolichol-phosphate-mannose (Dol-P-Man) to an alpha-D-Man-(1-&gt;6)-2-PEtn-alpha-D-Man-(1-&gt;4)-alpha-D-GlcN-(1-&gt;6)-(1-radyl,2-acyl-sn-glycero-3-phospho)-2-acyl-inositol intermediate to generate an alpha-D-Man-(1-&gt;2)-alpha-D-Man-(1-&gt;6)-2-PEtn-alpha-D-Man-(1-&gt;4)-alpha-D-GlcN-(1-&gt;6)-(1-radyl,2-acyl-sn-glycero-3-phospho)-2-acyl-inositol (also termed H6) and participates in the nineth step of the glycosylphosphatidylinositol-anchor biosynthesis. May also add the third mannose to an alpha-D-Man-(1-&gt;6)-alpha-D-Man-(1-&gt;4)-alpha-D-GlcN-(1-&gt;6)-(1-radyl,2-acyl-sn-glycero-3-phospho)-2-acyl-inositol (also termed H3) intermediate generating an alpha-D-Man-(1-&gt;2)-alpha-D-Man-(1-&gt;6)-alpha-D-Man-(1-&gt;4)-alpha-D-GlcN-(1-&gt;6)-(1-radyl,2-acyl-sn-glycero-3-phospho)-2-acyl-inositol (also termed H4). The chain is GPI alpha-1,2-mannosyltransferase 3 from Mus musculus (Mouse).